Here is a 510-residue protein sequence, read N- to C-terminus: MASIDDDDDERTPLLQDSHIGELVETQKQLKSRWWSIRVMYLTMFLSSVGFSIVMTSIWPYLQKVDQSADASFLGWVIASFSLGQMVASPLFGLWSNHRPRREPLVVSITILVAASCLYAYVHVPASHNKYYMLLARTFVGFGSGNVAVVRSYVAGATSLSERTGAMANISAFQAMGFILGPAFQAALSVIGETGITINGISLQVNMYTAPALMGALLGIGNIILIFAIFREHRVDDLEKNVSSINSESEVTDVEKANEGPIDQIAVISSNILFFVVLFVFAIFETISTPLTMDMYAWTRTQAVFYNGIILAAVGVESVIVFLTVKILCKKTGERVLLLGGLAVIWIGFFILLPWGNQMPKIQWTDLQNATIHNTTQWTSSIPSSGNHSVEPTGCPVIQTWCLYTPVIHLAQYLTSDILIGVGYPICNVMSYTLYSKIIGPKPQGLYMGWLTAAGSAARTLGPVFVSQIYTHLGTRWTFGIICAFVALSLLHLTAVYKRLIPFSTRYERL.

At 1-38 (MASIDDDDDERTPLLQDSHIGELVETQKQLKSRWWSIR) the chain is on the cytoplasmic side. Positions 14-15 (LL) match the Dileucine internalization motif motif. The chain crosses the membrane as a helical span at residues 39-59 (VMYLTMFLSSVGFSIVMTSIW). Residues 60–72 (PYLQKVDQSADAS) are Extracellular-facing. The helical transmembrane segment at 73-93 (FLGWVIASFSLGQMVASPLFG) threads the bilayer. At 94–103 (LWSNHRPRRE) the chain is on the cytoplasmic side. The helical transmembrane segment at 104–124 (PLVVSITILVAASCLYAYVHV) threads the bilayer. Topologically, residues 125-132 (PASHNKYY) are extracellular. The chain crosses the membrane as a helical span at residues 133-155 (MLLARTFVGFGSGNVAVVRSYVA). Topologically, residues 156–171 (GATSLSERTGAMANIS) are cytoplasmic. Residues 172–192 (AFQAMGFILGPAFQAALSVIG) traverse the membrane as a helical segment. At 193–209 (ETGITINGISLQVNMYT) the chain is on the extracellular side. A helical transmembrane segment spans residues 210-230 (APALMGALLGIGNIILIFAIF). Residues 231 to 264 (REHRVDDLEKNVSSINSESEVTDVEKANEGPIDQ) are Cytoplasmic-facing. The helical transmembrane segment at 265–285 (IAVISSNILFFVVLFVFAIFE) threads the bilayer. The Extracellular segment spans residues 286 to 302 (TISTPLTMDMYAWTRTQ). Residues 303 to 323 (AVFYNGIILAAVGVESVIVFL) form a helical membrane-spanning segment. Over 324–335 (TVKILCKKTGER) the chain is Cytoplasmic. A helical membrane pass occupies residues 336–356 (VLLLGGLAVIWIGFFILLPWG). Topologically, residues 357–406 (NQMPKIQWTDLQNATIHNTTQWTSSIPSSGNHSVEPTGCPVIQTWCLYTP) are extracellular. N-linked (GlcNAc...) asparagine glycosylation is found at asparagine 369 and asparagine 374. Residues 407–427 (VIHLAQYLTSDILIGVGYPIC) traverse the membrane as a helical segment. The Cytoplasmic segment spans residues 428–445 (NVMSYTLYSKIIGPKPQG). Residues 446–466 (LYMGWLTAAGSAARTLGPVFV) traverse the membrane as a helical segment. Residues 467–476 (SQIYTHLGTR) lie on the Extracellular side of the membrane. The chain crosses the membrane as a helical span at residues 477-497 (WTFGIICAFVALSLLHLTAVY). Residues 498 to 510 (KRLIPFSTRYERL) are Cytoplasmic-facing.

It belongs to the major facilitator superfamily.

It is found in the lysosome membrane. In terms of biological role, may be a carrier that transport small solutes by using chemiosmotic ion gradients. The chain is Major facilitator superfamily domain-containing protein 8 (mfsd8) from Xenopus laevis (African clawed frog).